The primary structure comprises 691 residues: Dynamin-1-like protein (691 aa).

In terms of domain architecture, Dynamin-type G spans 22 to 301; sequence IIQLPQIAVV…LMHHIRDCLP (280 aa). Residues 32–39 are G1 motif; sequence GTQSSGKS. 32–40 contacts GTP; the sequence is GTQSSGKSS. Residues 58 to 60 are G2 motif; the sequence is VTR. The interval 145 to 148 is G3 motif; sequence DLPG. Positions 214–217 are G4 motif; it reads TKLD. Residues 214–220 and 245–248 contribute to the GTP site; these read TKLDLMD and NRSQ. The tract at residues 244–247 is G5 motif; sequence VNRS. Residues 343-488 are middle domain; it reads YCNTIEGTAK…NEMVHNLVAI (146 aa). 2 stretches are compositionally biased toward basic and acidic residues: residues 522–531 and 551–563; these read LPTSVPRDKM and KKGD…EKTK. A disordered region spans residues 522 to 573; it reads LPTSVPRDKMAGGAQAEQEGGTGTWRGMLKKGDEGQGEEKTKLQSSIPASPQ. Residues 599-690 enclose the GED domain; sequence CEVIERLIKS…VIAEIRETHL (92 aa). The tract at residues 609–623 is important for homodimerization; sequence YFLIVRKNIQDSVPK.

Belongs to the TRAFAC class dynamin-like GTPase superfamily. Dynamin/Fzo/YdjA family. In terms of assembly, homotetramer; dimerizes through the N-terminal GTP-middle region of one molecule binding to the GED domain of another DNM1L molecule. Oligomerizes in a GTP-dependent manner to form membrane-associated tubules with a spiral pattern.

The protein resides in the cytoplasm. Its subcellular location is the cytosol. The protein localises to the golgi apparatus. It localises to the endomembrane system. It is found in the mitochondrion outer membrane. The protein resides in the peroxisome. Its subcellular location is the membrane. The protein localises to the clathrin-coated pit. It localises to the cytoplasmic vesicle. It is found in the secretory vesicle. The protein resides in the synaptic vesicle membrane. The catalysed reaction is GTP + H2O = GDP + phosphate + H(+). Functions in mitochondrial and peroxisomal division. Mediates membrane fission through oligomerization into membrane-associated tubular structures that wrap around the scission site to constrict and sever the mitochondrial membrane through a GTP hydrolysis-dependent mechanism. The specific recruitment at scission sites is mediated by membrane receptors like MFF, MIEF1 and MIEF2 for mitochondrial membranes. While the recruitment by the membrane receptors is GTP-dependent, the following hydrolysis of GTP induces the dissociation from the receptors and allows DNM1L filaments to curl into closed rings that are probably sufficient to sever a double membrane. May play a role in the circadian control of mitochondrial ATP production. In Danio rerio (Zebrafish), this protein is Dynamin-1-like protein.